A 198-amino-acid polypeptide reads, in one-letter code: ATP-dependent Clp protease proteolytic subunit 1 (198 aa).

Serine 98 functions as the Nucleophile in the catalytic mechanism. The active site involves histidine 123.

Belongs to the peptidase S14 family. In terms of assembly, fourteen ClpP subunits assemble into 2 heptameric rings which stack back to back to give a disk-like structure with a central cavity, resembling the structure of eukaryotic proteasomes.

The protein localises to the cytoplasm. It carries out the reaction Hydrolysis of proteins to small peptides in the presence of ATP and magnesium. alpha-casein is the usual test substrate. In the absence of ATP, only oligopeptides shorter than five residues are hydrolyzed (such as succinyl-Leu-Tyr-|-NHMec, and Leu-Tyr-Leu-|-Tyr-Trp, in which cleavage of the -Tyr-|-Leu- and -Tyr-|-Trp bonds also occurs).. Functionally, cleaves peptides in various proteins in a process that requires ATP hydrolysis. Has a chymotrypsin-like activity. Plays a major role in the degradation of misfolded proteins. The protein is ATP-dependent Clp protease proteolytic subunit 1 of Leptospira interrogans serogroup Icterohaemorrhagiae serovar copenhageni (strain Fiocruz L1-130).